The chain runs to 435 residues: Trigger factor (435 aa).

The PPIase FKBP-type domain maps to 162–247 (GDRVIIDFKG…VKNVAEATLP (86 aa)).

Belongs to the FKBP-type PPIase family. Tig subfamily.

The protein resides in the cytoplasm. It catalyses the reaction [protein]-peptidylproline (omega=180) = [protein]-peptidylproline (omega=0). Functionally, involved in protein export. Acts as a chaperone by maintaining the newly synthesized protein in an open conformation. Functions as a peptidyl-prolyl cis-trans isomerase. The sequence is that of Trigger factor from Chromobacterium violaceum (strain ATCC 12472 / DSM 30191 / JCM 1249 / CCUG 213 / NBRC 12614 / NCIMB 9131 / NCTC 9757 / MK).